Reading from the N-terminus, the 254-residue chain is Protein CbbY, plasmid (254 aa).

It belongs to the HAD-like hydrolase superfamily. CbbY/CbbZ/Gph/YieH family.

The protein is Protein CbbY, plasmid (cbbYP) of Cupriavidus necator (strain ATCC 17699 / DSM 428 / KCTC 22496 / NCIMB 10442 / H16 / Stanier 337) (Ralstonia eutropha).